The following is a 241-amino-acid chain: Ribulose-phosphate 3-epimerase 1 (241 aa).

Ser21 is a binding site for substrate. Residues His46, Asp48, and His79 each contribute to the a divalent metal cation site. Residue Asp48 is the Proton acceptor of the active site. Substrate contacts are provided by residues His79, 155–158, 192–194, and 214–215; these read GFGG, DGG, and GS. Asp192 contacts a divalent metal cation. Asp192 functions as the Proton donor in the catalytic mechanism.

Belongs to the ribulose-phosphate 3-epimerase family. The cofactor is a divalent metal cation.

The catalysed reaction is D-ribulose 5-phosphate = D-xylulose 5-phosphate. Its pathway is carbohydrate degradation. Functionally, catalyzes the reversible epimerization of D-ribulose 5-phosphate to D-xylulose 5-phosphate. In Cupriavidus necator (strain ATCC 17699 / DSM 428 / KCTC 22496 / NCIMB 10442 / H16 / Stanier 337) (Ralstonia eutropha), this protein is Ribulose-phosphate 3-epimerase 1.